Reading from the N-terminus, the 385-residue chain is 2-oxoglutarate-dependent dioxygenase AFUA_1G01000 (385 aa).

Residues 203–327 form the Fe2OG dioxygenase domain; it reads PSDDFLRLLR…RYSVLVGTRP (125 aa). Residues H230, D232, and H304 each coordinate Fe cation. Position 318 (R318) interacts with 2-oxoglutarate.

This sequence belongs to the iron/ascorbate-dependent oxidoreductase family. Requires Fe(2+) as cofactor.

Its function is as follows. 2-oxoglutarate-dependent dioxygenase; part of the gene cluster that mediates the biosynthesis of fumigermin that inhibits germination of spores of the inducing S.rapamycinicus, and thus helps the fungus to defend resources in the shared habitat against a bacterial competitor. The partially reducing polyketide synthase fngA alone is sufficient for the production of fumigermin. FgnA catalyzes the condensation of 3 malonyl-CoA units to an acetyl-CoA starter, and 3 methylations to yield fumigermin. It is remarkable that the five cluster genes including fgnA are conserved in distantly related fungi, supporting the assumption of a fumigermin cluster; it is thus possible that originally all five genes were functional, but that the genes encoding tailoring enzymes became inactive from mutations, similar to the case of the fgnA gene in strains A1163 and Af293. The sequence is that of 2-oxoglutarate-dependent dioxygenase AFUA_1G01000 from Aspergillus fumigatus (strain ATCC MYA-4609 / CBS 101355 / FGSC A1100 / Af293) (Neosartorya fumigata).